Reading from the N-terminus, the 394-residue chain is Elongation factor Tu (394 aa).

In terms of domain architecture, tr-type G spans 10–204 (KPHVNIGTIG…AVDSYIPQPV (195 aa)). Positions 19–26 (GHVDHGKT) are G1. 19–26 (GHVDHGKT) contributes to the GTP binding site. Residue T26 coordinates Mg(2+). Positions 60 to 64 (GITIS) are G2. Residues 81–84 (DCPG) are G3. Residues 81–85 (DCPGH) and 136–139 (NKVD) contribute to the GTP site. A G4 region spans residues 136–139 (NKVD). Positions 174–176 (SAL) are G5.

It belongs to the TRAFAC class translation factor GTPase superfamily. Classic translation factor GTPase family. EF-Tu/EF-1A subfamily. As to quaternary structure, monomer.

It localises to the cytoplasm. The catalysed reaction is GTP + H2O = GDP + phosphate + H(+). GTP hydrolase that promotes the GTP-dependent binding of aminoacyl-tRNA to the A-site of ribosomes during protein biosynthesis. This is Elongation factor Tu from Rickettsia canadensis (strain McKiel).